We begin with the raw amino-acid sequence, 189 residues long: Histidinol-phosphate aminotransferase (189 aa).

Belongs to the class-II pyridoxal-phosphate-dependent aminotransferase family. Histidinol-phosphate aminotransferase subfamily. As to quaternary structure, homodimer. Pyridoxal 5'-phosphate serves as cofactor.

The enzyme catalyses L-histidinol phosphate + 2-oxoglutarate = 3-(imidazol-4-yl)-2-oxopropyl phosphate + L-glutamate. Its pathway is amino-acid biosynthesis; L-histidine biosynthesis; L-histidine from 5-phospho-alpha-D-ribose 1-diphosphate: step 7/9. The chain is Histidinol-phosphate aminotransferase (hisC) from Thiocapsa roseopersicina.